The primary structure comprises 330 residues: MVETFYEKDADLGLLKEKTIAVLGYGSQGHAQAQNLKDSGLKVIIGLKKDSKSKETAQRDGFEVYETSEAVKKGDIIQVLIPDEVQSEVYKKDIEPNLDEGNALGFSHGFNIHFGQIVPPKNVDVFMVAPKSPGHLVRRMYLEGKGVPGLLAVHQDFSGKAKELGLSYAKGIGCTRAGVIKTTFKEETETDLFGEQAVLCGGTTSLIKAGFETLVEAGYQPEIAYFECLNELKLIVDLLYEGGLKKMRYSISDTAQYGDITIGPKIIDDRVKETMKDVLANIQNGNFAKDWILENKANRPVFNALTEKDNNSLLEQVGEKLRAMMPWIES.

In terms of domain architecture, KARI N-terminal Rossmann spans 2-182 (VETFYEKDAD…GCTRAGVIKT (181 aa)). NADP(+) contacts are provided by residues 25-28 (YGSQ), Lys-48, Ser-51, Ser-53, and 83-86 (DEVQ). His-108 is an active-site residue. Gly-134 is an NADP(+) binding site. The KARI C-terminal knotted domain maps to 183-328 (TFKEETETDL…EKLRAMMPWI (146 aa)). Residues Asp-191, Glu-195, Glu-227, and Glu-231 each coordinate Mg(2+). Ser-252 contacts substrate.

This sequence belongs to the ketol-acid reductoisomerase family. Mg(2+) serves as cofactor.

The catalysed reaction is (2R)-2,3-dihydroxy-3-methylbutanoate + NADP(+) = (2S)-2-acetolactate + NADPH + H(+). It carries out the reaction (2R,3R)-2,3-dihydroxy-3-methylpentanoate + NADP(+) = (S)-2-ethyl-2-hydroxy-3-oxobutanoate + NADPH + H(+). It functions in the pathway amino-acid biosynthesis; L-isoleucine biosynthesis; L-isoleucine from 2-oxobutanoate: step 2/4. It participates in amino-acid biosynthesis; L-valine biosynthesis; L-valine from pyruvate: step 2/4. In terms of biological role, involved in the biosynthesis of branched-chain amino acids (BCAA). Catalyzes an alkyl-migration followed by a ketol-acid reduction of (S)-2-acetolactate (S2AL) to yield (R)-2,3-dihydroxy-isovalerate. In the isomerase reaction, S2AL is rearranged via a Mg-dependent methyl migration to produce 3-hydroxy-3-methyl-2-ketobutyrate (HMKB). In the reductase reaction, this 2-ketoacid undergoes a metal-dependent reduction by NADPH to yield (R)-2,3-dihydroxy-isovalerate. The protein is Ketol-acid reductoisomerase (NADP(+)) of Petrotoga mobilis (strain DSM 10674 / SJ95).